The chain runs to 435 residues: Gamma-glutamyl phosphate reductase (435 aa).

Belongs to the gamma-glutamyl phosphate reductase family.

It is found in the cytoplasm. It carries out the reaction L-glutamate 5-semialdehyde + phosphate + NADP(+) = L-glutamyl 5-phosphate + NADPH + H(+). It participates in amino-acid biosynthesis; L-proline biosynthesis; L-glutamate 5-semialdehyde from L-glutamate: step 2/2. Its function is as follows. Catalyzes the NADPH-dependent reduction of L-glutamate 5-phosphate into L-glutamate 5-semialdehyde and phosphate. The product spontaneously undergoes cyclization to form 1-pyrroline-5-carboxylate. This Bradyrhizobium diazoefficiens (strain JCM 10833 / BCRC 13528 / IAM 13628 / NBRC 14792 / USDA 110) protein is Gamma-glutamyl phosphate reductase.